A 404-amino-acid polypeptide reads, in one-letter code: NADH-quinone oxidoreductase subunit D 2 (404 aa).

Belongs to the complex I 49 kDa subunit family. As to quaternary structure, NDH-1 is composed of 14 different subunits. Subunits NuoB, C, D, E, F, and G constitute the peripheral sector of the complex.

It localises to the cell inner membrane. It catalyses the reaction a quinone + NADH + 5 H(+)(in) = a quinol + NAD(+) + 4 H(+)(out). Its function is as follows. NDH-1 shuttles electrons from NADH, via FMN and iron-sulfur (Fe-S) centers, to quinones in the respiratory chain. The immediate electron acceptor for the enzyme in this species is believed to be ubiquinone. Couples the redox reaction to proton translocation (for every two electrons transferred, four hydrogen ions are translocated across the cytoplasmic membrane), and thus conserves the redox energy in a proton gradient. The protein is NADH-quinone oxidoreductase subunit D 2 of Rhizobium etli (strain CIAT 652).